A 393-amino-acid chain; its full sequence is Formate-dependent phosphoribosylglycinamide formyltransferase (393 aa).

Residues 22 to 23 and E82 contribute to the N(1)-(5-phospho-beta-D-ribosyl)glycinamide site; that span reads EL. ATP is bound by residues R114, K155, 160–165, 195–198, and E203; these read SSGHGQ and EGFI. An ATP-grasp domain is found at 119-308; that stretch reads RLAAEELGLK…QFALHARAIL (190 aa). Residues E267 and E279 each contribute to the Mg(2+) site. N(1)-(5-phospho-beta-D-ribosyl)glycinamide-binding positions include D286, K356, and 363–364; that span reads RR.

The protein belongs to the PurK/PurT family. As to quaternary structure, homodimer.

The enzyme catalyses N(1)-(5-phospho-beta-D-ribosyl)glycinamide + formate + ATP = N(2)-formyl-N(1)-(5-phospho-beta-D-ribosyl)glycinamide + ADP + phosphate + H(+). It functions in the pathway purine metabolism; IMP biosynthesis via de novo pathway; N(2)-formyl-N(1)-(5-phospho-D-ribosyl)glycinamide from N(1)-(5-phospho-D-ribosyl)glycinamide (formate route): step 1/1. In terms of biological role, involved in the de novo purine biosynthesis. Catalyzes the transfer of formate to 5-phospho-ribosyl-glycinamide (GAR), producing 5-phospho-ribosyl-N-formylglycinamide (FGAR). Formate is provided by PurU via hydrolysis of 10-formyl-tetrahydrofolate. The chain is Formate-dependent phosphoribosylglycinamide formyltransferase from Actinobacillus pleuropneumoniae serotype 3 (strain JL03).